The sequence spans 1205 residues: Centrosome and spindle pole associated protein 1 (1205 aa).

Coiled coils occupy residues 12–34 (QKAK…EMKG) and 87–108 (KLKE…TQAK). Residues 16–37 (LAKDKAELESDPPYMEMKGKAS) form a disordered region. A compositionally biased stretch (basic and acidic residues) spans 158–173 (STEKVRQVEKNIEPKS). Disordered stretches follow at residues 158–187 (STEK…KSDL), 222–277 (SRRP…PGVS), and 380–467 (QQKK…GSTL). A compositionally biased stretch (polar residues) spans 176–187 (NKNPISQGKSDL). Composition is skewed to basic and acidic residues over residues 222 to 233 (SRRPLKQTKEEV) and 257 to 275 (ANGE…RDPG). Residues 357 to 391 (EDRELTKRRKEKYRQELLEQIAEQQKKKRREKDLA) adopt a coiled-coil conformation. Composition is skewed to basic and acidic residues over residues 401–410 (DPEKSPDRLK) and 417–428 (RHFEEMPPERPR). Ser-405 carries the phosphoserine modification. The span at 433–447 (TPPPPFSAPSSPSVP) shows a compositional bias: pro residues. Positions 574–618 (STQSLQSYQEALQEQIREREARRKKERLEKEEYEAKLEAEMRIYN) form a coiled coil. The tract at residues 677 to 704 (AENLEDSANKNSGPLQTQSSPFARGNTF) is disordered. The segment covering 685 to 697 (NKNSGPLQTQSSP) has biased composition (polar residues). The stretch at 724–813 (RFQIEEKRQR…EKHNLQLQHY (90 aa)) forms a coiled coil. Residues Ser-850 and Ser-869 each carry the phosphoserine modification. Positions 862–881 (SSMSRAQSPPVPARKNQLRA) are disordered. Positions 874-911 (ARKNQLRAEEEKKNVIMELSEMRKQLRSEERRLQGRLL) form a coiled coil. Ser-915 carries the phosphoserine modification. Residues 993-1014 (QQQALLREQQKRLNRIKMRRDA) adopt a coiled-coil conformation. Disordered stretches follow at residues 1086-1105 (GLDF…SLKS), 1124-1169 (RLTE…RPGT), and 1182-1205 (NEEQ…AAHA). Positions 1124–1134 (RLTEQQKKPTN) are enriched in basic and acidic residues. Residues 1135 to 1145 (TDDEGSLVDPD) show a composition bias toward acidic residues. The segment covering 1146–1156 (DIMRHLSDDGR) has biased composition (basic and acidic residues).

In terms of assembly, interacts with PLEKHG6. Interacts with ARMC9, TOGARAM1, CCDC66, CEP104 and CEP290. Post-translationally, phosphorylated. Phosphorylation increases in colcemide-treated cells.

It is found in the cytoplasm. Its subcellular location is the cytoskeleton. It localises to the microtubule organizing center. The protein localises to the centrosome. The protein resides in the spindle. It is found in the spindle pole. Its subcellular location is the cell projection. It localises to the cilium. In terms of biological role, may play a role in cell-cycle-dependent microtubule organization. The sequence is that of Centrosome and spindle pole associated protein 1 (Cspp1) from Mus musculus (Mouse).